A 248-amino-acid chain; its full sequence is Probable transcriptional regulatory protein ECH_0704 (248 aa).

The tract at residues 1–21 is disordered; the sequence is MAGHSQFANIKHRKGAQDAKR.

This sequence belongs to the TACO1 family.

It localises to the cytoplasm. This is Probable transcriptional regulatory protein ECH_0704 from Ehrlichia chaffeensis (strain ATCC CRL-10679 / Arkansas).